We begin with the raw amino-acid sequence, 485 residues long: Glutamyl-tRNA(Gln) amidotransferase subunit A (485 aa).

Residues Lys78 and Ser153 each act as charge relay system in the active site. Ser177 (acyl-ester intermediate) is an active-site residue.

It belongs to the amidase family. GatA subfamily. As to quaternary structure, heterotrimer of A, B and C subunits.

The catalysed reaction is L-glutamyl-tRNA(Gln) + L-glutamine + ATP + H2O = L-glutaminyl-tRNA(Gln) + L-glutamate + ADP + phosphate + H(+). Functionally, allows the formation of correctly charged Gln-tRNA(Gln) through the transamidation of misacylated Glu-tRNA(Gln) in organisms which lack glutaminyl-tRNA synthetase. The reaction takes place in the presence of glutamine and ATP through an activated gamma-phospho-Glu-tRNA(Gln). In Bacillus anthracis (strain A0248), this protein is Glutamyl-tRNA(Gln) amidotransferase subunit A.